Reading from the N-terminus, the 203-residue chain is Membrane-spanning 4-domains subfamily A member 13 (203 aa).

4 helical membrane passes run 15 to 35, 56 to 76, 84 to 104, and 141 to 161; these read VLGV…YFLL, MGTS…VKAA, ILCT…AASL, and FAIA…SSIV.

Belongs to the MS4A family.

The protein resides in the membrane. Functionally, may be involved in signal transduction as a component of a multimeric receptor complex. This chain is Membrane-spanning 4-domains subfamily A member 13 (Ms4a13), found in Mus musculus (Mouse).